The chain runs to 152 residues: UPF0225 protein YchJ (152 aa).

Belongs to the UPF0225 family.

The polypeptide is UPF0225 protein YchJ (Shigella flexneri serotype 5b (strain 8401)).